We begin with the raw amino-acid sequence, 308 residues long: Cytochrome b (308 aa).

The next 4 membrane-spanning stretches (helical) occupy residues 1-21 (FGSL…LLAT), 45-66 (WLIR…YLHI), 81-101 (WNTG…GYVL), and 146-166 (FFAL…IHFT). Residue H65 coordinates heme b. Heme b-binding residues include H150 and H164. H169 provides a ligand contact to a ubiquinone. A run of 3 helical transmembrane segments spans residues 194–214 (VKDI…ALFS), 256–276 (LGGV…PFLH), and 288–308 (LSQF…WVGS).

Belongs to the cytochrome b family. As to quaternary structure, the cytochrome bc1 complex contains 11 subunits: 3 respiratory subunits (MT-CYB, CYC1 and UQCRFS1), 2 core proteins (UQCRC1 and UQCRC2) and 6 low-molecular weight proteins (UQCRH/QCR6, UQCRB/QCR7, UQCRQ/QCR8, UQCR10/QCR9, UQCR11/QCR10 and a cleavage product of UQCRFS1). This cytochrome bc1 complex then forms a dimer. Heme b is required as a cofactor.

The protein localises to the mitochondrion inner membrane. Component of the ubiquinol-cytochrome c reductase complex (complex III or cytochrome b-c1 complex) that is part of the mitochondrial respiratory chain. The b-c1 complex mediates electron transfer from ubiquinol to cytochrome c. Contributes to the generation of a proton gradient across the mitochondrial membrane that is then used for ATP synthesis. The protein is Cytochrome b (MT-CYB) of Colaptes rupicola (Southern Andean flicker).